A 184-amino-acid chain; its full sequence is Putative YfeABCD regulator YfeE (184 aa).

A run of 3 helical transmembrane segments spans residues 15–35, 84–104, and 162–182; these read IAGW…IINF, LSAG…GLSL, and ILPS…GIMI.

To E.coli YniB.

It is found in the cell membrane. Putative regulator of YfeABCD, an ABC transporter locus involved in inorganic iron transport. This is Putative YfeABCD regulator YfeE (yfeE) from Yersinia pestis.